The sequence spans 205 residues: HTH-type transcriptional regulator PksA (205 aa).

One can recognise an HTH tetR-type domain in the interval 8–68; it reads EKRRKQIAEA…FAMKLVQEKV (61 aa). A DNA-binding region (H-T-H motif) is located at residues 31-50; it reads SARNIAKEAGLSLGALRHYF.

Functionally, transcriptional regulation of the polyketide synthase operon. This is HTH-type transcriptional regulator PksA (pksA) from Bacillus subtilis (strain 168).